Consider the following 750-residue polypeptide: MIIRSPEPEVKILVDRDPIKTSFEEWARPGHFSRTIAKGPDTTTWIWNLHADAHDFDSHTSDLEEISRKVFSAHFGQLSIIFLWLSGMYFHGARFSNYEAWLSDPTHIGPSAQVVWPIVGQEILNGDVGGGFRGIQITSGFFQIWRASGITSELQLYCTAIGALVFAALMLFAGWFHYHKAAPKLAWFQDVESMLNHHLAGLLGLGSLSWAGHQVHVSLPINQFLNAGVDPKEIPLPHEFILNRDLLAQLYPSFAEGATPFFTLNWSKYSEFLTFRGGLDPVTGGLWLTDIAHHHLAIAILFLVAGHMYRTNWGIGHGIKDILEAHKGPFTGQGHKGLYEILTTSWHAQLSLNLAMLGSLTIVVAHHMYAMPPYPYLATDYGTQLSLFTHHMWIGGFLIVGAAAHAAIFMVRDYDPTTRYNDLLDRVLRHRDAIISHLNWVCIFLGFHSFGLYIHNDTMSALGRPQDMFSDTAIQLQPVFAQWIQNTHALAPGATAPGATASTSLTWGGDDLVAVGGKVALLPIPLGTADFLVHHIHAFTIHVTVLILLKGVLFARSSRLIPDKANLGFRFPCDGPGRGGTCQVSAWDHVFLGLFWMYNAISVVIFHFSWKMQSDVWGSISDQGVVTHITGGNFAQSSITINGWLRDFLWAQASQVIQSYGSSLSAYGLFFLGAHFVWAFSLMFLFSGRGYWQELIESIVWAHNKLKVAPATQPRALSIIQGRAVGVTHYLLGGIATTWAFFLARIIAVG.

Helical transmembrane passes span 70-93 (VFSAHFGQLSIIFLWLSGMYFHGA), 156-179 (LYCTAIGALVFAALMLFAGWFHYH), 195-219 (LNHHLAGLLGLGSLSWAGHQVHVSL), 291-309 (IAHHHLAIAILFLVAGHMY), 346-369 (WHAQLSLNLAMLGSLTIVVAHHMY), 385-411 (LSLFTHHMWIGGFLIVGAAAHAAIFMV), 433-455 (AIISHLNWVCIFLGFHSFGLYIH), and 531-549 (FLVHHIHAFTIHVTVLILL). Positions 573 and 582 each coordinate [4Fe-4S] cluster. 2 helical membrane passes run 589-610 (HVFLGLFWMYNAISVVIFHFSW) and 664-686 (LSAYGLFFLGAHFVWAFSLMFLF). Histidine 675 provides a ligand contact to chlorophyll a'. Residues methionine 683 and tyrosine 691 each contribute to the chlorophyll a site. Position 692 (tryptophan 692) interacts with phylloquinone. Residues 724-744 (AVGVTHYLLGGIATTWAFFLA) traverse the membrane as a helical segment.

Belongs to the PsaA/PsaB family. The PsaA/B heterodimer binds the P700 chlorophyll special pair and subsequent electron acceptors. PSI consists of a core antenna complex that captures photons, and an electron transfer chain that converts photonic excitation into a charge separation. The eukaryotic PSI reaction center is composed of at least 11 subunits. Requires P700 is a chlorophyll a/chlorophyll a' dimer, A0 is one or more chlorophyll a, A1 is one or both phylloquinones and FX is a shared 4Fe-4S iron-sulfur center. as cofactor.

Its subcellular location is the plastid. The protein localises to the chloroplast thylakoid membrane. The catalysed reaction is reduced [plastocyanin] + hnu + oxidized [2Fe-2S]-[ferredoxin] = oxidized [plastocyanin] + reduced [2Fe-2S]-[ferredoxin]. PsaA and PsaB bind P700, the primary electron donor of photosystem I (PSI), as well as the electron acceptors A0, A1 and FX. PSI is a plastocyanin-ferredoxin oxidoreductase, converting photonic excitation into a charge separation, which transfers an electron from the donor P700 chlorophyll pair to the spectroscopically characterized acceptors A0, A1, FX, FA and FB in turn. Oxidized P700 is reduced on the lumenal side of the thylakoid membrane by plastocyanin. The chain is Photosystem I P700 chlorophyll a apoprotein A1 from Populus trichocarpa (Western balsam poplar).